The following is a 152-amino-acid chain: Arginine repressor (152 aa).

It belongs to the ArgR family.

Its subcellular location is the cytoplasm. It participates in amino-acid biosynthesis; L-arginine biosynthesis [regulation]. In terms of biological role, regulates arginine biosynthesis genes. The protein is Arginine repressor of Thermotoga sp. (strain RQ2).